A 161-amino-acid polypeptide reads, in one-letter code: Ribonuclease H (161 aa).

The region spanning 5–149 (EKLAIAAATD…VDAIAVAFSK (145 aa)) is the RNase H type-1 domain. Residues Asp14, Glu53, Asp78, and Asp141 each coordinate Mg(2+).

The protein belongs to the RNase H family. In terms of assembly, monomer. The cofactor is Mg(2+).

The protein localises to the cytoplasm. The catalysed reaction is Endonucleolytic cleavage to 5'-phosphomonoester.. Endonuclease that specifically degrades the RNA of RNA-DNA hybrids. The polypeptide is Ribonuclease H (Prochlorococcus marinus (strain NATL2A)).